Reading from the N-terminus, the 488-residue chain is Probable metabolite transport protein YBR241C (488 aa).

The Cytoplasmic segment spans residues 1–18 (MAETERLMPNGGSRETKP). A helical transmembrane segment spans residues 19–39 (LITGHLILGTIVACLGSIQYG). Residues 40–87 (YHIAELNAPQEFLSCSRFEAPDENISYDDTWVGQHGLKQCIALTDSQY) are Vacuolar-facing. Asn-63 carries an N-linked (GlcNAc...) asparagine glycan. Residues 88–108 (GAITSIFSIGGLFGSYYAGNW) form a helical membrane-spanning segment. Residues 109-121 (ANRYGRKYVSMGA) are Cytoplasmic-facing. The helical transmembrane segment at 122–142 (SAMCMVSSLLLFFSNSYLQLL) threads the bilayer. Over 143-146 (FGRF) the chain is Vacuolar. The chain crosses the membrane as a helical span at residues 147-167 (LVGMSCGTAIVITPLFINEIA). The Cytoplasmic segment spans residues 168–178 (PVEWRGAMGSM). The helical transmembrane segment at 179–198 (NQVSINLGILLTQTLALKYA) threads the bilayer. Residues 199–204 (DSYNWR) lie on the Vacuolar side of the membrane. The helical transmembrane segment at 205–225 (WLLFSGSVIAVANILAWLKVD) threads the bilayer. Residues 226-299 (ESPRWLVSHG…DPSYKKPRTV (74 aa)) are Cytoplasmic-facing. Positions 258–279 (EIQDWQRSHGHNRDPESSEETH) are enriched in basic and acidic residues. The segment at 258 to 281 (EIQDWQRSHGHNRDPESSEETHSG) is disordered. The chain crosses the membrane as a helical span at residues 300–320 (ILAILSCQQFCGINSIIFYGV). At 321-322 (KV) the chain is on the vacuolar side. A helical membrane pass occupies residues 323 to 337 (IGKILPDYSIQVNFA). Topologically, residues 338–344 (ISILNVV) are cytoplasmic. Residues 345–364 (VTLAASAIIDHVGRRPLLLA) traverse the membrane as a helical segment. Residues 365–390 (STTVMTAMSLLISVGLTLSVSFLLVT) lie on the Vacuolar side of the membrane. A helical transmembrane segment spans residues 391–411 (ATFVYIAAFAIGLGPIPFLII). Topologically, residues 412 to 419 (GELSYPQD) are cytoplasmic. The helical transmembrane segment at 420–442 (AATAQSFGTVCNWLATFIVGYLF) threads the bilayer. Topologically, residues 443–446 (PIGH) are vacuolar. A helical membrane pass occupies residues 447 to 463 (GLMGGYVFAIFAAIAAM). The Cytoplasmic portion of the chain corresponds to 464 to 488 (FATYVYKRVPETKGKTTYSEVWAGY).

This sequence belongs to the major facilitator superfamily. Sugar transporter (TC 2.A.1.1) family.

The protein resides in the vacuole membrane. The protein is Probable metabolite transport protein YBR241C of Saccharomyces cerevisiae (strain ATCC 204508 / S288c) (Baker's yeast).